Here is a 321-residue protein sequence, read N- to C-terminus: L-lactate dehydrogenase (321 aa).

NAD(+)-binding positions include valine 19, aspartate 40, lysine 45, tyrosine 71, and 85–86 (GA). Substrate contacts are provided by residues glutamine 88, arginine 94, and 126–129 (NPVD). Residues 124 to 126 (ATN) and serine 149 contribute to the NAD(+) site. Position 154–157 (154–157 (DTAR)) interacts with substrate. 2 residues coordinate beta-D-fructose 1,6-bisphosphate: arginine 159 and histidine 174. The active-site Proton acceptor is histidine 181. Position 226 is a phosphotyrosine (tyrosine 226). A substrate-binding site is contributed by threonine 235.

The protein belongs to the LDH/MDH superfamily. LDH family. As to quaternary structure, homotetramer.

It is found in the cytoplasm. It catalyses the reaction (S)-lactate + NAD(+) = pyruvate + NADH + H(+). It participates in fermentation; pyruvate fermentation to lactate; (S)-lactate from pyruvate: step 1/1. Its activity is regulated as follows. Allosterically activated by fructose 1,6-bisphosphate (FBP). Functionally, catalyzes the conversion of lactate to pyruvate. The polypeptide is L-lactate dehydrogenase (Oceanobacillus iheyensis (strain DSM 14371 / CIP 107618 / JCM 11309 / KCTC 3954 / HTE831)).